A 317-amino-acid chain; its full sequence is Beta-ketoacyl-[acyl-carrier-protein] synthase III (317 aa).

Residues cysteine 112 and histidine 244 contribute to the active site. The interval 245-249 is ACP-binding; the sequence is QANLR. Asparagine 274 is a catalytic residue.

The protein belongs to the thiolase-like superfamily. FabH family. As to quaternary structure, homodimer.

It is found in the cytoplasm. It carries out the reaction malonyl-[ACP] + acetyl-CoA + H(+) = 3-oxobutanoyl-[ACP] + CO2 + CoA. The protein operates within lipid metabolism; fatty acid biosynthesis. Functionally, catalyzes the condensation reaction of fatty acid synthesis by the addition to an acyl acceptor of two carbons from malonyl-ACP. Catalyzes the first condensation reaction which initiates fatty acid synthesis and may therefore play a role in governing the total rate of fatty acid production. Possesses both acetoacetyl-ACP synthase and acetyl transacylase activities. Its substrate specificity determines the biosynthesis of branched-chain and/or straight-chain of fatty acids. The chain is Beta-ketoacyl-[acyl-carrier-protein] synthase III from Salmonella typhimurium (strain LT2 / SGSC1412 / ATCC 700720).